We begin with the raw amino-acid sequence, 432 residues long: Adenylosuccinate synthetase (432 aa).

GTP contacts are provided by residues 12–18 (GDEGKGK) and 40–42 (GHT). The active-site Proton acceptor is Asp-13. Asp-13 and Gly-40 together coordinate Mg(2+). Residues 13–16 (DEGK), 38–41 (NAGH), Thr-130, Arg-144, Gln-225, Thr-240, and Arg-304 contribute to the IMP site. The active-site Proton donor is the His-41. Position 300–306 (300–306 (ATTGRPR)) interacts with substrate. Residues Arg-306, 332 to 334 (KLD), and 414 to 416 (SVG) contribute to the GTP site.

Belongs to the adenylosuccinate synthetase family. Homodimer. Mg(2+) is required as a cofactor.

It localises to the cytoplasm. The enzyme catalyses IMP + L-aspartate + GTP = N(6)-(1,2-dicarboxyethyl)-AMP + GDP + phosphate + 2 H(+). Its pathway is purine metabolism; AMP biosynthesis via de novo pathway; AMP from IMP: step 1/2. Its function is as follows. Plays an important role in the de novo pathway of purine nucleotide biosynthesis. Catalyzes the first committed step in the biosynthesis of AMP from IMP. The protein is Adenylosuccinate synthetase of Anaeromyxobacter dehalogenans (strain 2CP-C).